Consider the following 138-residue polypeptide: Glutaredoxin-like protein C5orf63 (138 aa).

Residues Cys41 and Cys44 are joined by a disulfide bond. Over residues 55–64 (ENRQPYKDQK) the composition is skewed to basic and acidic residues. The tract at residues 55 to 88 (ENRQPYKDQKLPGTRRRRSPSSPSHPHMASQSGK) is disordered.

It belongs to the glutaredoxin family. YDR286C subfamily.

In Homo sapiens (Human), this protein is Glutaredoxin-like protein C5orf63 (C5orf63).